A 379-amino-acid polypeptide reads, in one-letter code: MSHSGADPEQRQQASEADAMAATFRASEHQHIRYNPLQDEWVLVSAHRMKRPWQGQVEPQLLKTVPRHDPLNPLCPGATRANGEVNPHYDGTFLFDNDFPALQPDAPDPGPSDHPLFRAEAARGVCKVMCFHPWSDVTLPLMSVPEIRAVIDAWASVTEELGAQYPWVQIFENKGAMMGCSNPHPHCQVWASSFLPDIAQREERSQQTYHSQHGKPLLLEYGHQELLRKERLVLTSEHWIVLVPFWAVWPFQTLLLPRRHVRRLPELNPAERDDLASIMKKLLTKYDNLFETSFPYSMGWHGAPTGLKTGATCDHWQLHAHYYPPLLRSATVRKFMVGYEMLAQAQRDLTPEQAAERLRALPEVHYCLAQKDKETAAIA.

The segment covering 1-10 (MSHSGADPEQ) has biased composition (basic and acidic residues). Residues 1 to 20 (MSHSGADPEQRQQASEADAM) form a disordered region. Cys-75 is a Zn(2+) binding site. Residues Ala-81, 97 to 98 (ND), and Asn-173 each bind UDP-alpha-D-glucose. His-184 contributes to the Zn(2+) binding site. His-186 functions as the Tele-UMP-histidine intermediate in the catalytic mechanism. Residue Gln-188 participates in UDP-alpha-D-glucose binding. Zn(2+)-binding residues include Glu-202, His-301, His-319, and His-321. UDP-alpha-D-glucose is bound by residues 334-337 (KFMV) and 339-340 (YE).

This sequence belongs to the galactose-1-phosphate uridylyltransferase type 1 family. Homodimer. Zn(2+) is required as a cofactor.

It carries out the reaction alpha-D-galactose 1-phosphate + UDP-alpha-D-glucose = alpha-D-glucose 1-phosphate + UDP-alpha-D-galactose. It participates in carbohydrate metabolism; galactose metabolism. Its function is as follows. Plays an important role in galactose metabolism. This is Galactose-1-phosphate uridylyltransferase (Galt) from Mus musculus (Mouse).